The following is a 353-amino-acid chain: Zinc transporter 5 (353 aa).

An N-terminal signal peptide occupies residues 1–27; the sequence is MATAAMTKVFVLLFLVAACYLPAHAAA. Residues 28 to 48 lie on the Extracellular side of the membrane; that stretch reads AECDCATDTAGRDKAQALRLK. A helical transmembrane segment spans residues 49–69; sequence VIAIFCILAGSTVGAALPSLG. Residues 70–86 lie on the Cytoplasmic side of the membrane; sequence GRFPAIQPETDVFLSVK. The helical transmembrane segment at 87-107 threads the bilayer; it reads AFAGGVILATGLVHILPAAFE. Over 108 to 121 the chain is Extracellular; the sequence is ALSSPCLVGGPWKR. The helical transmembrane segment at 122-142 threads the bilayer; sequence FPFAGMVAMVSAIGTLIVDTV. Residues 143-198 are Cytoplasmic-facing; it reads ATGYFHRTDAKRKAAAVADEPADDLEASDEHSHGHAHGMSVMSVAPAGEEDLVRHR. The chain crosses the membrane as a helical span at residues 199 to 219; the sequence is VISQVLELGVVVHSLIIGMSL. Over 220-230 the chain is Extracellular; the sequence is GASDFPSTVRP. The chain crosses the membrane as a helical span at residues 231–251; sequence LVPALTFHQFFEGIGLGGCIV. Over 252–260 the chain is Cytoplasmic; it reads QAKFRVRSV. The helical transmembrane segment at 261–281 threads the bilayer; the sequence is VTMALFFSLTTPAGIVVGIGI. At 282-292 the chain is on the extracellular side; that stretch reads SSVYDANSPTA. A helical membrane pass occupies residues 293-313; it reads LVVQGLLEAAAAGILVYMALV. Over 314–332 the chain is Cytoplasmic; sequence DILAEDFMKTKVQRRGRLQ. A helical membrane pass occupies residues 333–353; it reads LAMNVALLLGAGLMSMIAIWA.

The protein belongs to the ZIP transporter (TC 2.A.5) family.

The protein localises to the cell membrane. Zinc transporter that mediates zinc uptake from the rhizosphere and may be responsible for the translocation of zinc within the plant. The protein is Zinc transporter 5 (ZIP5) of Oryza sativa subsp. japonica (Rice).